A 120-amino-acid chain; its full sequence is Holo-[acyl-carrier-protein] synthase (120 aa).

Residues Asp-8 and Glu-60 each coordinate Mg(2+).

This sequence belongs to the P-Pant transferase superfamily. AcpS family. Mg(2+) serves as cofactor.

The protein localises to the cytoplasm. The catalysed reaction is apo-[ACP] + CoA = holo-[ACP] + adenosine 3',5'-bisphosphate + H(+). Its function is as follows. Transfers the 4'-phosphopantetheine moiety from coenzyme A to a Ser of acyl-carrier-protein. The protein is Holo-[acyl-carrier-protein] synthase of Anaplasma marginale (strain Florida).